Reading from the N-terminus, the 232-residue chain is Phosphatidylserine decarboxylase proenzyme (232 aa).

S190 acts as the Schiff-base intermediate with substrate; via pyruvic acid in catalysis. S190 carries the pyruvic acid (Ser); by autocatalysis modification.

It belongs to the phosphatidylserine decarboxylase family. PSD-A subfamily. Heterodimer of a large membrane-associated beta subunit and a small pyruvoyl-containing alpha subunit. Pyruvate is required as a cofactor. Post-translationally, is synthesized initially as an inactive proenzyme. Formation of the active enzyme involves a self-maturation process in which the active site pyruvoyl group is generated from an internal serine residue via an autocatalytic post-translational modification. Two non-identical subunits are generated from the proenzyme in this reaction, and the pyruvate is formed at the N-terminus of the alpha chain, which is derived from the carboxyl end of the proenzyme. The post-translation cleavage follows an unusual pathway, termed non-hydrolytic serinolysis, in which the side chain hydroxyl group of the serine supplies its oxygen atom to form the C-terminus of the beta chain, while the remainder of the serine residue undergoes an oxidative deamination to produce ammonia and the pyruvoyl prosthetic group on the alpha chain.

It is found in the cell membrane. It carries out the reaction a 1,2-diacyl-sn-glycero-3-phospho-L-serine + H(+) = a 1,2-diacyl-sn-glycero-3-phosphoethanolamine + CO2. The protein operates within phospholipid metabolism; phosphatidylethanolamine biosynthesis; phosphatidylethanolamine from CDP-diacylglycerol: step 2/2. Catalyzes the formation of phosphatidylethanolamine (PtdEtn) from phosphatidylserine (PtdSer). The sequence is that of Phosphatidylserine decarboxylase proenzyme from Rhodopseudomonas palustris (strain HaA2).